Reading from the N-terminus, the 120-residue chain is Glycine cleavage system H protein (120 aa).

Positions 17-99 (VATVGITAHA…MGAGWFFKLK (83 aa)) constitute a Lipoyl-binding domain. An N6-lipoyllysine modification is found at Lys-58.

This sequence belongs to the GcvH family. In terms of assembly, the glycine cleavage system is composed of four proteins: P, T, L and H. The cofactor is (R)-lipoate.

Functionally, the glycine cleavage system catalyzes the degradation of glycine. The H protein shuttles the methylamine group of glycine from the P protein to the T protein. This is Glycine cleavage system H protein from Rhizobium rhizogenes (strain K84 / ATCC BAA-868) (Agrobacterium radiobacter).